Reading from the N-terminus, the 47-residue chain is Defensin-like protein 1 (47 aa).

4 cysteine pairs are disulfide-bonded: Cys3-Cys47, Cys14-Cys36, Cys20-Cys41, and Cys24-Cys43.

This sequence belongs to the DEFL family. Protease inhibitor I18 (RTI/MTI-2) subfamily.

This is Defensin-like protein 1 from Sorghum bicolor (Sorghum).